The sequence spans 225 residues: Insulin-induced gene 2 protein (225 aa).

The Cytoplasmic portion of the chain corresponds to 1 to 28 (MAENDAKPTLPKKSGPYISSVTSHGMNL). Residues 29–51 (VIRGIVLFFIGVFLALVLNLLQI) traverse the membrane as a helical segment. At 52–70 (QRNVTLFPPDVITSIFSSA) the chain is on the lumenal side. A helical membrane pass occupies residues 71–88 (WWVPPCCGTASAVIGLLY). Topologically, residues 89–103 (PCMDRHLGEPHKFKR) are cytoplasmic. The helical transmembrane segment at 104-126 (EWSSVMRCVAVFVGINHASAKVD) threads the bilayer. At 127–129 (FAN) the chain is on the lumenal side. Residues 130 to 148 (NIQLSLTLAALSIGLWWTF) form a helical membrane-spanning segment. Over 149–153 (DRSRS) the chain is Cytoplasmic. The chain crosses the membrane as a helical span at residues 154–175 (GFGLGVGIAFLATLVSQLLVYN). Over 176-189 (GVYQYTSPDFLYVR) the chain is Lumenal. A helical transmembrane segment spans residues 190–207 (SWLPCIFFAGGITMGNIG). The Cytoplasmic portion of the chain corresponds to 208–225 (RQLAMYECKVIAEKSHED). The KxHxx signature appears at 219–225 (AEKSHED).

This sequence belongs to the INSIG family. In terms of assembly, interacts with SCAP; interaction is direct and only takes place in the presence of sterols; it prevents interaction between SCAP and the coat protein complex II (COPII). Associates with the SCAP-SREBP complex; association is mediated via its interaction with SCAP and only takes place in the presence of sterols.

It localises to the endoplasmic reticulum membrane. In terms of biological role, oxysterol-binding protein that mediates feedback control of cholesterol synthesis by controlling both endoplasmic reticulum to Golgi transport of SCAP and degradation of HMGCR. Acts as a negative regulator of cholesterol biosynthesis by mediating the retention of the SCAP-SREBP complex in the endoplasmic reticulum, thereby blocking the processing of sterol regulatory element-binding proteins (SREBPs). Binds oxysterol, including 22-hydroxycholesterol, 24-hydroxycholesterol, 25-hydroxycholesterol and 27-hydroxycholesterol, regulating interaction with SCAP and retention of the SCAP-SREBP complex in the endoplasmic reticulum. In presence of oxysterol, interacts with SCAP, retaining the SCAP-SREBP complex in the endoplasmic reticulum, thereby preventing SCAP from escorting SREBPs to the Golgi. Sterol deprivation reduces oxysterol-binding, disrupting the interaction between INSIG2 and SCAP, thereby promoting Golgi transport of the SCAP-SREBP complex, followed by processing and nuclear translocation of SREBPs. Also regulates cholesterol synthesis by regulating degradation of HMGCR. This Gallus gallus (Chicken) protein is Insulin-induced gene 2 protein.